We begin with the raw amino-acid sequence, 187 residues long: Oleosin Zm-II (187 aa).

An N-acetylalanine modification is found at Ala-2. The polar stretch occupies residues 2–51 (ADRDRSGIYGGAHATYGQQQQQGGGGRPMGEQVKKGMLHDKGPTASQALT). The interval 17–42 (YGQQQQQGGGGRPMGEQVKKGMLHDK) is disordered. The span at 33–42 (QVKKGMLHDK) shows a compositional bias: basic and acidic residues. 3 helical membrane passes run 50 to 70 (LTVATLFPLGGLLLVLSGLAL), 83 to 103 (VFLIFSPVLVPAALLIGTAVM), and 104 to 124 (GFLTSGALGLGGLSSLTCLAN). Residues 52–123 (VATLFPLGGL…GGLSSLTCLA (72 aa)) form a hydrophobic region. Low complexity predominate over residues 155–169 (TAQAGQAIQGRAQEA). A disordered region spans residues 155–187 (TAQAGQAIQGRAQEAGTGGGAGAGAGGGGRASS). A compositionally biased stretch (gly residues) spans 170–187 (GTGGGAGAGAGGGGRASS).

This sequence belongs to the oleosin family. In terms of processing, the N-terminus is blocked. In terms of tissue distribution, found in embryonic axis, scutellum, and aleurone layer.

It is found in the lipid droplet. The protein localises to the membrane. May have a structural role to stabilize the lipid body during desiccation of the seed by preventing coalescence of the oil. Probably interacts with both lipid and phospholipid moieties of lipid bodies. May also provide recognition signals for specific lipase anchorage in lipolysis during seedling growth. The protein is Oleosin Zm-II (OLE18) of Zea mays (Maize).